The chain runs to 264 residues: MKKLKLHGFNNLTKSLSFCIYDICYVKTAEERDGYIAYIDELYNANRLTEILSETCSIIGANILNIARQDYEPQGASVTILVSEEPVDPQLIDPTEHPGPLPEAVVAHLDKSHICVHTYPESHPEAGLCTFRADIEVSTCGVISPLNALNYLIHQLESDIVTIDYRVRGFTRDINGMKYFIDHEINSIQNFMSEDMKGLYDMMDVNVYQENIFHTKMLLKEFDLKHYMFHTQPEDLSEEERKVITDLLWKEMREIYYGRNIPAV.

The active-site Schiff-base intermediate with substrate; via pyruvic acid is the serine 112. Serine 112 is modified (pyruvic acid (Ser); by autocatalysis). Catalysis depends on histidine 117, which acts as the Proton acceptor; for processing activity. Cysteine 140 (proton donor; for catalytic activity) is an active-site residue.

The protein belongs to the prokaryotic AdoMetDC family. Type 2 subfamily. In terms of assembly, heterooctamer of four alpha and four beta chains arranged as a tetramer of alpha/beta heterodimers. Requires pyruvate as cofactor. Post-translationally, is synthesized initially as an inactive proenzyme. Formation of the active enzyme involves a self-maturation process in which the active site pyruvoyl group is generated from an internal serine residue via an autocatalytic post-translational modification. Two non-identical subunits are generated from the proenzyme in this reaction, and the pyruvate is formed at the N-terminus of the alpha chain, which is derived from the carboxyl end of the proenzyme. The post-translation cleavage follows an unusual pathway, termed non-hydrolytic serinolysis, in which the side chain hydroxyl group of the serine supplies its oxygen atom to form the C-terminus of the beta chain, while the remainder of the serine residue undergoes an oxidative deamination to produce ammonia and the pyruvoyl group blocking the N-terminus of the alpha chain.

The enzyme catalyses S-adenosyl-L-methionine + H(+) = S-adenosyl 3-(methylsulfanyl)propylamine + CO2. It functions in the pathway amine and polyamine biosynthesis; S-adenosylmethioninamine biosynthesis; S-adenosylmethioninamine from S-adenosyl-L-methionine: step 1/1. Functionally, catalyzes the decarboxylation of S-adenosylmethionine to S-adenosylmethioninamine (dcAdoMet), the propylamine donor required for the synthesis of the polyamines spermine and spermidine from the diamine putrescine. The polypeptide is S-adenosylmethionine decarboxylase proenzyme (Enterobacter sp. (strain 638)).